A 253-amino-acid polypeptide reads, in one-letter code: Triosephosphate isomerase (253 aa).

9–11 (NWK) serves as a coordination point for substrate. The Electrophile role is filled by His-95. Catalysis depends on Glu-167, which acts as the Proton acceptor. Residues Gly-173, Ser-213, and 234–235 (GG) each bind substrate. A Phosphoserine modification is found at Ser-213.

The protein belongs to the triosephosphate isomerase family. In terms of assembly, homodimer.

Its subcellular location is the cytoplasm. The catalysed reaction is D-glyceraldehyde 3-phosphate = dihydroxyacetone phosphate. It participates in carbohydrate biosynthesis; gluconeogenesis. The protein operates within carbohydrate degradation; glycolysis; D-glyceraldehyde 3-phosphate from glycerone phosphate: step 1/1. Its function is as follows. Involved in the gluconeogenesis. Catalyzes stereospecifically the conversion of dihydroxyacetone phosphate (DHAP) to D-glyceraldehyde-3-phosphate (G3P). The chain is Triosephosphate isomerase from Bacillus velezensis (strain DSM 23117 / BGSC 10A6 / LMG 26770 / FZB42) (Bacillus amyloliquefaciens subsp. plantarum).